The chain runs to 396 residues: Protein BOP3 (396 aa).

Disordered stretches follow at residues 1-22 (MSTF…NNVN), 98-126 (GVPA…ENLP), 145-168 (PTPM…GISH), 203-239 (VARR…KFTN), 254-274 (RDQQ…QQDL), and 355-396 (REGR…LNST). Composition is skewed to polar residues over residues 111–124 (QPHN…SSEN), 159–168 (ASSSTGGISH), and 210–230 (GTKS…SRNL). A compositionally biased stretch (basic and acidic residues) spans 355-369 (REGRQVHDDLDDRTC). Positions 370-396 (SESSSRNESPVRTITKDNSVGKILNST) are enriched in polar residues.

It localises to the cytoplasm. The protein localises to the nucleus. In terms of biological role, involved in resistance to methylmercury. Overexpression suppresses a PAM1-SLV3 double null mutation. The chain is Protein BOP3 (BOP3) from Saccharomyces cerevisiae (strain ATCC 204508 / S288c) (Baker's yeast).